The primary structure comprises 207 residues: uncharacterized protein (207 aa).

A helical membrane pass occupies residues 177–197; it reads LILAIGFIIGILLPTFFILLG.

Its subcellular location is the membrane. This is an uncharacterized protein from Haemophilus influenzae (strain ATCC 51907 / DSM 11121 / KW20 / Rd).